We begin with the raw amino-acid sequence, 117 residues long: uncharacterized protein (117 aa).

This is an uncharacterized protein from Acidianus convivator (ABV).